Here is a 586-residue protein sequence, read N- to C-terminus: CTP synthase (586 aa).

Residues 1–278 (MRKHPQTATK…DAFVVRRLNL (278 aa)) form an amidoligase domain region. Residue serine 20 coordinates CTP. Serine 20 serves as a coordination point for UTP. Residues 21–26 (SLGKGL) and aspartate 78 contribute to the ATP site. Mg(2+) contacts are provided by aspartate 78 and glutamate 152. Residues 159-161 (DIE), 199-204 (KTKPTQ), and lysine 235 each bind CTP. Residues 199–204 (KTKPTQ) and lysine 235 each bind UTP. The Glutamine amidotransferase type-1 domain maps to 303–551 (RIALVGKYVE…VGAAIDYKAG (249 aa)). Glycine 366 lines the L-glutamine pocket. Cysteine 393 acts as the Nucleophile; for glutamine hydrolysis in catalysis. Residues 394-397 (LGLQ), glutamate 416, and arginine 477 contribute to the L-glutamine site. Catalysis depends on residues histidine 524 and glutamate 526. Positions 560–586 (EIPEHTPNGSSHRDGVGQPLPEPASRG) are disordered.

Belongs to the CTP synthase family. In terms of assembly, homotetramer.

The enzyme catalyses UTP + L-glutamine + ATP + H2O = CTP + L-glutamate + ADP + phosphate + 2 H(+). It carries out the reaction L-glutamine + H2O = L-glutamate + NH4(+). The catalysed reaction is UTP + NH4(+) + ATP = CTP + ADP + phosphate + 2 H(+). It participates in pyrimidine metabolism; CTP biosynthesis via de novo pathway; CTP from UDP: step 2/2. With respect to regulation, allosterically activated by GTP, when glutamine is the substrate; GTP has no effect on the reaction when ammonia is the substrate. The allosteric effector GTP functions by stabilizing the protein conformation that binds the tetrahedral intermediate(s) formed during glutamine hydrolysis. Inhibited by the product CTP, via allosteric rather than competitive inhibition. Functionally, catalyzes the ATP-dependent amination of UTP to CTP with either L-glutamine or ammonia as the source of nitrogen. Regulates intracellular CTP levels through interactions with the four ribonucleotide triphosphates. This is CTP synthase from Mycobacterium tuberculosis (strain ATCC 25177 / H37Ra).